The chain runs to 536 residues: Velvet complex subunit B (536 aa).

Residues 1–26 (MIQRTTDPAAGSSTSGPPTNSLSWGS) show a composition bias toward polar residues. Disordered regions lie at residues 1–27 (MIQRTTDPAAGSSTSGPPTNSLSWGSR), 106–143 (PNAAQDRGPPMPAKPRRPTNPPPPSNTHGSPPAPAIPF), 157–409 (SAPA…RTLV), and 508–536 (KLPLRNRHGSGSKRRRRGAGGGSDDEESD). Residues 25-512 (GSRHNGKLYT…NQQNMKLPLR (488 aa)) form the Velvet domain. A compositionally biased stretch (pro residues) spans 114-143 (PPMPAKPRRPTNPPPPSNTHGSPPAPAIPF). 2 stretches are compositionally biased toward low complexity: residues 158–170 (APASDRSPSSASA) and 190–265 (PYGP…YPPY). Residues 280–305 (TSNFDHSQPVTSSVDQETNSPVVTTT) show a composition bias toward polar residues. Positions 306-315 (ARDDDQREGE) are enriched in basic and acidic residues. The segment covering 328 to 342 (PSNSGAPSTSPTAST) has biased composition (low complexity). Positions 356-399 (EEREGPDGGPDLREPIEPGSTKAREEEDARTGTEKGDPKDKSDA) are enriched in basic and acidic residues. Positions 400–409 (QRATYTRTLV) are enriched in polar residues. Basic residues predominate over residues 511-525 (LRNRHGSGSKRRRRG).

This sequence belongs to the velvet family. VelB subfamily. In terms of assembly, component of the heterotrimeric velvet complex composed of laeA, veA and velB; VeA acting as a bridging protein between laeA and velB. Forms a heterodimeric complex with vosA; the formation of the velB-vosA complex is light-dependent.

It is found in the nucleus. It localises to the cytoplasm. Component of the velvet transcription factor complex that controls sexual/asexual developmental ratio in response to light, promoting sexual development in the darkness while stimulating asexual sporulation under illumination. The velvet complex acts as a global regulator for secondary metabolite gene expression. Component of the velB-VosA heterodimeric complex that plays a dual role in activating genes associated with spore maturation and repressing certain development-associated genes. The velB-VosA complex binds DNA through the DNA-binding domain of vosA that recognizes an 11-nucleotide consensus sequence 5'-CTGGCCGCGGC-3' consisting of two motifs in the promoters of key developmental regulatory genes. This Schizophyllum commune (strain H4-8 / FGSC 9210) (Split gill fungus) protein is Velvet complex subunit B.